The following is a 402-amino-acid chain: MSKLSLSSLDKTNLEGKKVLVRVDFNVPLNEDGQITDDTRIRAAIPTIEYLINHSAKVILAAHFGRPKGQVNEKMRLTPVAARLSELLGQNVALTNSCIGDEAVAQSNSLSNGDVLLLENVRFFGEEEKNDLEFAKKLASHADMYVNDAFGAAHRAHASTQGVTNYLSPSVAGFLLEKELKYLQGAIDSPKRPLAAIVGGSKVSSKIGVLDSLLDKCDKIMIGGGMIFTFYKARGLDVGKSLVEEDKLELAKDLEAKAKAKGVELLLPTDVVLADEFSPDANSKISQIDSISGNWMGLDIGPDSIKVFQNALAECKTIIWNGPMGVFEFDKFADGTNAIATTLADLSAFSEVCTIIGGGDSVAAVEKAGLAEKMSHISTGGGASLELLEGKTLPGVAALNDA.

Residues 24 to 26 (DFN), Arg-40, 63 to 66 (HFGR), Arg-122, and Arg-155 each bind substrate. ATP is bound by residues Lys-206, Gly-297, Glu-328, and 358-361 (GGDS).

The protein belongs to the phosphoglycerate kinase family. As to quaternary structure, monomer.

Its subcellular location is the cytoplasm. It carries out the reaction (2R)-3-phosphoglycerate + ATP = (2R)-3-phospho-glyceroyl phosphate + ADP. Its pathway is carbohydrate degradation; glycolysis; pyruvate from D-glyceraldehyde 3-phosphate: step 2/5. This is Phosphoglycerate kinase from Prochlorococcus marinus (strain MIT 9312).